We begin with the raw amino-acid sequence, 469 residues long: UDP-N-acetylmuramate--L-alanine ligase (469 aa).

123–129 contacts ATP; sequence GSHGKTT.

This sequence belongs to the MurCDEF family.

It is found in the cytoplasm. It carries out the reaction UDP-N-acetyl-alpha-D-muramate + L-alanine + ATP = UDP-N-acetyl-alpha-D-muramoyl-L-alanine + ADP + phosphate + H(+). It participates in cell wall biogenesis; peptidoglycan biosynthesis. In terms of biological role, cell wall formation. The sequence is that of UDP-N-acetylmuramate--L-alanine ligase from Synechococcus sp. (strain CC9605).